A 649-amino-acid polypeptide reads, in one-letter code: MASVSALTEELDSITSELHAVEIQIQELTERQEELIQKKKVLTKKIKQCLEDSDAGASNEYDSSPAAWNKEDFPWSGKVKDVLQNVFKLQKFRPLQLETINVTMAGKEVFLVMPTGGGKGLCYQLPALCSDGFTLVICPLISLMEDQLMVLKQLGISATMLNASSSKEHVKWVHAEMVNKNSELKLIYVTPEKIAKSKMFMSRLEKAYEARRFTRIAVDEVHCCSQWGHDFRPDYKALGILKRQFPNASLIGLTATATNHVLTDAQKILCIEKCFTFTASFNRPNLYYEVRQKPSNTEDFIEDIVKLINGRYKGQSGIIYCFSQKDSEQVTVSLRNLGIHAGAYHANLEPEDKTTVHRKWSANEIQVVVATVAFGMGIDKPDVRFVIHHSMSKSMENYYQESGRAGRDDMKADCILYYGFGDIFRISSMVVMENVGQQKLYEMVSYCQNISKCRRLLMAQHFDEVWNSEACNKMCDNCCKDSAFERKNITEYCRDLIKILKQAEELNEKLTPLKLIDSWMGKGAAKLRVAGVVAPTLPREDLEKIIAHFLIQQYLKEDYSFTAYATISYLKIGPKANLLNNEAHAITMQVTKSTQNSFRVESSQTCHSEQGDKKMEEKNSGNFQKKAANMLQQSGSKNTGAKKRKIDDA.

Positions 100–275 constitute a Helicase ATP-binding domain; it reads INVTMAGKEV…QKILCIEKCF (176 aa). 113–120 contributes to the ATP binding site; it reads MPTGGGKG. Positions 219–222 match the DEVH box motif; the sequence is DEVH. One can recognise a Helicase C-terminal domain in the interval 300-451; that stretch reads FIEDIVKLIN…EMVSYCQNIS (152 aa). The Zn(2+) site is built by C453, C471, C475, and C478. N6-acetyllysine occurs at positions 514 and 522. Residues S597 and S602 each carry the phosphoserine modification. Positions 597 to 608 are enriched in polar residues; sequence SFRVESSQTCHS. Residues 597–649 form a disordered region; sequence SFRVESSQTCHSEQGDKKMEEKNSGNFQKKAANMLQQSGSKNTGAKKRKIDDA. Residues 609-619 are compositionally biased toward basic and acidic residues; sequence EQGDKKMEEKN. Residues 630–639 are compositionally biased toward polar residues; that stretch reads MLQQSGSKNT. Position 634 is a phosphoserine (S634). A compositionally biased stretch (basic residues) spans 640–649; it reads GAKKRKIDDA.

It belongs to the helicase family. RecQ subfamily. May form homodimers or higher order oligomers. Interacts with EXO1. Interacts with MLH1. Interacts with PARP1. The cofactor is Mg(2+). Requires Mn(2+) as cofactor. Zn(2+) serves as cofactor.

The protein resides in the nucleus. It catalyses the reaction Couples ATP hydrolysis with the unwinding of duplex DNA by translocating in the 3'-5' direction.. The enzyme catalyses ATP + H2O = ADP + phosphate + H(+). The catalysed reaction is dATP + H2O = dADP + phosphate + H(+). Its function is as follows. DNA helicase that plays a role in DNA damage repair and genome stability. Exhibits a magnesium- and ATP-dependent DNA-helicase activity that unwinds single- and double-stranded DNA in a 3'-5' direction. Plays a role in restoring regressed replication forks. Required to restart stalled replication forks induced by abortive topoisomerase 1 and 2 lesions. May play a role in the repair of DNA that is damaged by ultraviolet light or other mutagens. The polypeptide is ATP-dependent DNA helicase Q1 (RECQL) (Pongo abelii (Sumatran orangutan)).